The sequence spans 394 residues: Guanine nucleotide-binding protein G(s) subunit alpha isoforms short (394 aa).

Positions 1 to 23 (MGCLGNSKTEDQRNEEKAQREAN) are disordered. A lipid anchor (N-palmitoyl glycine) is attached at G2. The S-palmitoyl cysteine moiety is linked to residue C3. Positions 8–23 (KTEDQRNEEKAQREAN) are enriched in basic and acidic residues. The G-alpha domain maps to 39–394 (ATHRLLLLGA…RMHLRQYELL (356 aa)). The interval 42–55 (RLLLLGAGESGKST) is G1 motif. Position 47 to 55 (47 to 55 (GAGESGKST)) interacts with GTP. S54 contacts Mg(2+). The interval 68 to 90 (FNGEGGEEDPQAARSNSDGEKAT) is disordered. A G2 motif region spans residues 196–204 (DLLRCRVLT). Residues 197 to 204 (LLRCRVLT), 223 to 227 (DVGGQ), and 292 to 295 (NKQD) contribute to the GTP site. T204 contributes to the Mg(2+) binding site. The G3 motif stretch occupies residues 219–228 (FHMFDVGGQR). A G4 motif region spans residues 288–295 (ILFLNKQD). Residue K300 forms a Glycyl lysine isopeptide (Lys-Gly) (interchain with G-Cter in ubiquitin) linkage. Position 352 is a phosphoserine (S352). The tract at residues 364 to 369 (TCAVDT) is G5 motif. A366 lines the GTP pocket.

The protein belongs to the G-alpha family. G(s) subfamily. As to quaternary structure, heterotrimeric G proteins are composed of 3 units; alpha, beta and gamma. The alpha chain contains the guanine nucleotide binding site. Component of the TAS2R14-GNAS2 complex, consisting of TAS2R14, GNAS2, GNB1 and GNG2; within the complex interacts with TAS2R14; this complex plays a role in the perception of bitterness. Interacts with CRY1; the interaction may block GPCR-mediated regulation of cAMP concentrations. Interacts with ADCY6 and stimulates its adenylyl cyclase activity. Interacts with ADCY2 and ADCY5. Interacts (GDP-bound form) with RIC8B; promoting GNAS folding and association with the plasma membrane. Stimulates the ADCY5 adenylyl cyclase activity. Interaction with SASH1. Interacts with GASL2L2.

Its subcellular location is the cell membrane. It carries out the reaction GTP + H2O = GDP + phosphate + H(+). Its function is as follows. Guanine nucleotide-binding proteins (G proteins) function as transducers in numerous signaling pathways controlled by G protein-coupled receptors (GPCRs). The alpha chain contains the guanine nucleotide binding site and alternates between an active, GTP-bound state and an inactive, GDP-bound state. Signaling by an activated GPCR promotes GDP release and GTP binding. The alpha subunit has a low GTPase activity that converts bound GTP to GDP, thereby terminating the signal. Both GDP release and GTP hydrolysis are modulated by numerous regulatory proteins. Signaling involves the activation of adenylyl cyclases, resulting in increased levels of the signaling molecule cAMP. Functions downstream of beta-adrenergic receptors. Stimulates the Ras signaling pathway via RAPGEF2. The sequence is that of Guanine nucleotide-binding protein G(s) subunit alpha isoforms short (Gnas) from Mus musculus (Mouse).